A 205-amino-acid polypeptide reads, in one-letter code: tRNA (pseudouridine(54)-N(1))-methyltransferase (205 aa).

Residues L136, G156, 179 to 184 (LSPLEL), and C189 contribute to the S-adenosyl-L-methionine site.

This sequence belongs to the methyltransferase superfamily. TrmY family. Homodimer.

It is found in the cytoplasm. It catalyses the reaction pseudouridine(54) in tRNA + S-adenosyl-L-methionine = N(1)-methylpseudouridine(54) in tRNA + S-adenosyl-L-homocysteine + H(+). Functionally, specifically catalyzes the N1-methylation of pseudouridine at position 54 (Psi54) in tRNAs. The sequence is that of tRNA (pseudouridine(54)-N(1))-methyltransferase from Methanocaldococcus jannaschii (strain ATCC 43067 / DSM 2661 / JAL-1 / JCM 10045 / NBRC 100440) (Methanococcus jannaschii).